The primary structure comprises 45 residues: Large ribosomal subunit protein bL34c (45 aa).

The tract at residues methionine 1–serine 21 is disordered. Over residues asparagine 10 to phenylalanine 19 the composition is skewed to basic residues.

This sequence belongs to the bacterial ribosomal protein bL34 family.

It localises to the plastid. It is found in the chloroplast. The chain is Large ribosomal subunit protein bL34c (rpl34) from Cyanidium caldarium (Red alga).